The primary structure comprises 1030 residues: ATPase MORC2A (1030 aa).

At Ala2 the chain carries N-acetylalanine. ATP contacts are provided by residues Asn39, 87-89 (SAK), and 99-105 (QYGNGLK). Residue Asn39 participates in Mg(2+) binding. Positions 285-362 (KTRAEQEVKK…KDAKQRALKE (78 aa)) form a coiled coil. Lys427 contacts ATP. A CW-type zinc finger spans residues 490 to 544 (AMEIPTTIQCDLCLKWRTLPFQLSSVETDYPDTWVCSMNPDPEQDRCEASEQKQK). 4 residues coordinate Zn(2+): Cys499, Cys502, Cys525, and Cys536. The segment at 530 to 791 (DPEQDRCEAS…HPAELRKAQK (262 aa)) is disordered. 2 stretches are compositionally biased toward basic and acidic residues: residues 532–543 (EQDRCEASEQKQ) and 550–577 (LKKD…KLEA). Positions 555–583 (KTQEEKQKQLTEKIRQQQEKLEALQKTTP) form a coiled coil. The residue at position 582 (Thr582) is a Phosphothreonine. Ser614 carries the phosphoserine modification. Residues 629 to 646 (PSIQTPRPSTQLRKTSVI) are compositionally biased toward polar residues. Residues Lys650 and Lys702 each participate in a glycyl lysine isopeptide (Lys-Gly) (interchain with G-Cter in SUMO2) cross-link. Over residues 693–702 (PPLSLIPSSK) the composition is skewed to low complexity. The residue at position 703 (Ser703) is a Phosphoserine. Lys714 participates in a covalent cross-link: Glycyl lysine isopeptide (Lys-Gly) (interchain with G-Cter in SUMO2). Ser728 is subject to Phosphoserine. Thr731 carries the post-translational modification Phosphothreonine. Phosphoserine is present on residues Ser737 and Ser741. Residues 738–775 (LAVSDEEEAEEEAEKRRERCKRGKLAVKEEKKEANELS) adopt a coiled-coil conformation. Positions 763–772 (AVKEEKKEAN) are enriched in basic and acidic residues. A Glycyl lysine isopeptide (Lys-Gly) (interchain with G-Cter in SUMO2) cross-link involves residue Lys765. Phosphoserine is present on residues Ser775 and Ser777. Positions 779–791 (GEDHPAELRKAQK) are enriched in basic and acidic residues. Lys817 is covalently cross-linked (Glycyl lysine isopeptide (Lys-Gly) (interchain with G-Cter in SUMO2)). Residue Thr834 is modified to Phosphothreonine. The segment covering 837-849 (DRWVEKGSEDVRL) has biased composition (basic and acidic residues). 2 disordered regions span residues 837–874 (DRWV…EAMV) and 882–901 (PEPS…ATSP). Phosphoserine occurs at positions 854 and 859. Residues 856 to 865 (EHQSPDTQQE) show a composition bias toward polar residues. Lys930 is covalently cross-linked (Glycyl lysine isopeptide (Lys-Gly) (interchain with G-Cter in SUMO2)). A coiled-coil region spans residues 966–1011 (RADSRAKASEESLRTSEKKLRETEEKLQKLRTNIVALLQKVQEDID).

Homodimerizes upon ATP-binding and dissociate upon ATP hydrolysis; homodimerization is required for gene silencing. Binds histone H3 independently of the methylation status at 'Lys-9'. Interacts with HDAC4. Interacts with FAM208A/TASOR and MPHOSPH8; the interactions associate MORC2 with the HUSH complex which recruits MORC2 to heterochromatic loci. Interacts with Morc2b. In terms of processing, phosphorylated by PAK1 at Ser-737 upon DNA damage. Phosphorylation is required for ATPase activity and recruitment to damaged chromatin. Expressed in the axons and Schwann cells of peripheral nerves. Expressed in testes.

It localises to the nucleus. Its subcellular location is the cytoplasm. It is found in the cytosol. The protein localises to the chromosome. The protein resides in the nucleus matrix. It carries out the reaction ATP + H2O = ADP + phosphate + H(+). Its activity is regulated as follows. ATPase activity is dependent of phosphorylation by PAK1 and presence of DNA. In terms of biological role, essential for epigenetic silencing by the HUSH complex. Recruited by HUSH to target site in heterochromatin, the ATPase activity and homodimerization are critical for HUSH-mediated silencing. Represses germ cell-related genes and L1 retrotransposons in collaboration with SETDB1 and the HUSH complex, the silencing is dependent of repressive epigenetic modifications, such as H3K9me3 mark. Silencing events often occur within introns of transcriptionally active genes, and lead to the down-regulation of host gene expression. During DNA damage response, regulates chromatin remodeling through ATP hydrolysis. During DNA damage response, may regulate chromatin remodeling through ATP hydrolysis. This is ATPase MORC2A from Mus musculus (Mouse).